The chain runs to 246 residues: E3 ubiquitin-protein ligase MARCHF2 (246 aa).

Residues 56-116 (DTPSDCPFCR…ELCHTEFAVE (61 aa)) form an RING-CH-type zinc finger. 8 residues coordinate Zn(2+): Cys64, Cys67, Cys80, Cys82, His90, Cys93, Cys106, and Cys109. The required for interaction with IKBKG stretch occupies residues 121-246 (PLTEWLKDPG…LKKVAEETPV (126 aa)). Helical transmembrane passes span 138–158 (LCCD…SGWL) and 175–195 (AVGL…WTLV).

As to quaternary structure, interacts with STX6; the interaction promotes MARCHF2-mediated ubiquitination and degradation of CFTR. Interacts with MARCHF3. Interacts with GOPC/CAL; the interaction leads to CFTR ubiquitination and degradation. Interacts with CFTR; the interaction leads to CFTR ubiqtuitination and degradation. Interacts (via PDZ domain) with DLG1 (via PDZ domains); the interaction leads to DLG1 ubiqtuitination and degradation. Interacts with ERGIC3. Interacts with ADRB2. Interacts with IKBKG/NEMO; during the late stages of macrophage viral and bacterial infection; the interaction leads to ubiquitination and degradation of IKBKG/NEMO. As to expression, ubiquitously expressed. Present in liver (at protein level).

The protein localises to the endoplasmic reticulum membrane. Its subcellular location is the lysosome membrane. It localises to the endosome membrane. It is found in the golgi apparatus membrane. The protein resides in the cytoplasm. The protein localises to the cell membrane. It catalyses the reaction S-ubiquitinyl-[E2 ubiquitin-conjugating enzyme]-L-cysteine + [acceptor protein]-L-lysine = [E2 ubiquitin-conjugating enzyme]-L-cysteine + N(6)-ubiquitinyl-[acceptor protein]-L-lysine.. It functions in the pathway protein modification; protein ubiquitination. Its function is as follows. E3 ubiquitin-protein ligase that may mediate ubiquitination of TFRC and CD86, and promote their subsequent endocytosis and sorting to lysosomes via multivesicular bodies. E3 ubiquitin ligases accept ubiquitin from an E2 ubiquitin-conjugating enzyme in the form of a thioester and then directly transfer the ubiquitin to targeted substrates. Together with GOPC/CAL mediates the ubiquitination and lysosomal degradation of CFTR. Ubiquitinates and therefore mediates the degradation of DLG1. Regulates the intracellular trafficking and secretion of alpha1-antitrypsin/SERPINA1 and HP/haptoglobin via ubiquitination and degradation of the cargo receptor ERGIC3. Negatively regulates the antiviral and antibacterial immune response by repression of the NF-kB and type 1 IFN signaling pathways, via MARCHF2-mediated K48-linked polyubiquitination of IKBKG/NEMO, resulting in its proteasomal degradation. May be involved in endosomal trafficking through interaction with STX6. The polypeptide is E3 ubiquitin-protein ligase MARCHF2 (Marchf2) (Rattus norvegicus (Rat)).